The chain runs to 293 residues: 4-hydroxybenzoate octaprenyltransferase (293 aa).

7 helical membrane-spanning segments follow: residues 25–45 (IGNF…AKGL), 48–68 (LKVL…GCVI), 101–121 (LFVV…PLTI), 142–162 (HFPQ…AFAA), 165–185 (GAVA…ATIY), 223–243 (VMLA…FWYL), and 271–291 (FLNN…DLHL).

The protein belongs to the UbiA prenyltransferase family. Mg(2+) is required as a cofactor.

Its subcellular location is the cell inner membrane. It catalyses the reaction all-trans-octaprenyl diphosphate + 4-hydroxybenzoate = 4-hydroxy-3-(all-trans-octaprenyl)benzoate + diphosphate. Its pathway is cofactor biosynthesis; ubiquinone biosynthesis. In terms of biological role, catalyzes the prenylation of para-hydroxybenzoate (PHB) with an all-trans polyprenyl group. Mediates the second step in the final reaction sequence of ubiquinone-8 (UQ-8) biosynthesis, which is the condensation of the polyisoprenoid side chain with PHB, generating the first membrane-bound Q intermediate 3-octaprenyl-4-hydroxybenzoate. This Alkalilimnicola ehrlichii (strain ATCC BAA-1101 / DSM 17681 / MLHE-1) protein is 4-hydroxybenzoate octaprenyltransferase.